Consider the following 91-residue polypeptide: Small ribosomal subunit protein bS20 (91 aa).

Positions 1-18 (MPLHKSAEKRLRQSERRN) are enriched in basic and acidic residues. A disordered region spans residues 1–25 (MPLHKSAEKRLRQSERRNARNRARK).

It belongs to the bacterial ribosomal protein bS20 family.

In terms of biological role, binds directly to 16S ribosomal RNA. This is Small ribosomal subunit protein bS20 from Chlorobium luteolum (strain DSM 273 / BCRC 81028 / 2530) (Pelodictyon luteolum).